The following is a 466-amino-acid chain: Paraneoplastic antigen Ma3 homolog (466 aa).

The tract at residues 379–408 (RPYQGSRRRRHRRRGQHRKGGVPRDDSQGT) is disordered. Basic residues predominate over residues 384-399 (SRRRRHRRRGQHRKGG). A CCHC-type zinc finger spans residues 415–432 (TFCYSCGEDGHIRVHCFN). A disordered region spans residues 441-466 (QKRQAAMEKGNRSWAWEKSHPKPKTK). Residues 445-460 (AAMEKGNRSWAWEKSH) are compositionally biased toward basic and acidic residues.

Belongs to the PNMA family. In terms of tissue distribution, expressed in the cerebrum and cerebellum.

It is found in the nucleus. It localises to the nucleolus. In Mus musculus (Mouse), this protein is Paraneoplastic antigen Ma3 homolog (Pnma3).